The chain runs to 258 residues: Imidazole glycerol phosphate synthase subunit HisF (258 aa).

Active-site residues include D11 and D130.

Belongs to the HisA/HisF family. In terms of assembly, heterodimer of HisH and HisF.

The protein localises to the cytoplasm. It carries out the reaction 5-[(5-phospho-1-deoxy-D-ribulos-1-ylimino)methylamino]-1-(5-phospho-beta-D-ribosyl)imidazole-4-carboxamide + L-glutamine = D-erythro-1-(imidazol-4-yl)glycerol 3-phosphate + 5-amino-1-(5-phospho-beta-D-ribosyl)imidazole-4-carboxamide + L-glutamate + H(+). It participates in amino-acid biosynthesis; L-histidine biosynthesis; L-histidine from 5-phospho-alpha-D-ribose 1-diphosphate: step 5/9. Its function is as follows. IGPS catalyzes the conversion of PRFAR and glutamine to IGP, AICAR and glutamate. The HisF subunit catalyzes the cyclization activity that produces IGP and AICAR from PRFAR using the ammonia provided by the HisH subunit. The protein is Imidazole glycerol phosphate synthase subunit HisF of Yersinia pseudotuberculosis serotype IB (strain PB1/+).